The chain runs to 58 residues: Mitochondrial import receptor subunit TOM7 homolog (58 aa).

Over 1–16 (MKLSPATKSFIGKTVD) the chain is Cytoplasmic. A helical transmembrane segment spans residues 17-35 (ISTFAIQWGFVPFVVYLGF). The Mitochondrial intermembrane portion of the chain corresponds to 36 to 58 (KKGAEPMPNGQILPLSAMSLLWG).

It belongs to the Tom7 family. In terms of assembly, forms part of the preprotein translocase complex of the outer mitochondrial membrane (TOM complex).

The protein localises to the mitochondrion outer membrane. In Caenorhabditis elegans, this protein is Mitochondrial import receptor subunit TOM7 homolog (tomm-7).